The following is a 419-amino-acid chain: UDP-N-acetylglucosamine 1-carboxyvinyltransferase 2 (419 aa).

22 to 23 (KN) provides a ligand contact to phosphoenolpyruvate. R92 is a UDP-N-acetyl-alpha-D-glucosamine binding site. The active-site Proton donor is the C116. A 2-(S-cysteinyl)pyruvic acid O-phosphothioketal modification is found at C116. UDP-N-acetyl-alpha-D-glucosamine is bound by residues 121–125 (RPIDL), D306, and I328.

It belongs to the EPSP synthase family. MurA subfamily.

The protein localises to the cytoplasm. It carries out the reaction phosphoenolpyruvate + UDP-N-acetyl-alpha-D-glucosamine = UDP-N-acetyl-3-O-(1-carboxyvinyl)-alpha-D-glucosamine + phosphate. It functions in the pathway cell wall biogenesis; peptidoglycan biosynthesis. Cell wall formation. Adds enolpyruvyl to UDP-N-acetylglucosamine. This is UDP-N-acetylglucosamine 1-carboxyvinyltransferase 2 from Streptococcus pyogenes serotype M3 (strain ATCC BAA-595 / MGAS315).